The sequence spans 825 residues: Tuftelin-interacting protein 11 (825 aa).

The tract at residues 1–135 (MSMSHLYGKD…RTFAGGIKSN (135 aa)) is disordered. The segment covering 11 to 25 (EDSDGVEMENFEITD) has biased composition (acidic residues). Composition is skewed to basic and acidic residues over residues 41 to 61 (QTKEEATYGMWAERDSDDERP) and 85 to 114 (PAAEEKSDSDSDSETQARRETFPKDFEAKK). Positions 122–135 (KPSQRTFAGGIKSN) are enriched in polar residues. The G-patch domain maps to 145–191 (TKGIGQKLLQKMGYVQGRGLGKNAQGIIAPIEAKQRKGKGAVGAYGS).

It belongs to the TFP11/STIP family. As to quaternary structure, identified in the spliceosome C complex.

It is found in the nucleus. Functionally, involved in pre-mRNA splicing, specifically in spliceosome disassembly during late-stage splicing events. The polypeptide is Tuftelin-interacting protein 11 (tfip11) (Xenopus tropicalis (Western clawed frog)).